The sequence spans 317 residues: Transaldolase 1 (317 aa).

Residue Lys132 is the Schiff-base intermediate with substrate of the active site.

Belongs to the transaldolase family. Type 1 subfamily. Homodimer.

The protein localises to the cytoplasm. It catalyses the reaction D-sedoheptulose 7-phosphate + D-glyceraldehyde 3-phosphate = D-erythrose 4-phosphate + beta-D-fructose 6-phosphate. It participates in carbohydrate degradation; pentose phosphate pathway; D-glyceraldehyde 3-phosphate and beta-D-fructose 6-phosphate from D-ribose 5-phosphate and D-xylulose 5-phosphate (non-oxidative stage): step 2/3. In terms of biological role, transaldolase is important for the balance of metabolites in the pentose-phosphate pathway. This Shigella sonnei (strain Ss046) protein is Transaldolase 1.